The sequence spans 94 residues: Neutrophil defensin 1 (94 aa).

The signal sequence occupies residues 1–19 (MRTLAILAAILLVALQAQA). A propeptide spanning residues 20–38 (EPLQARADEVAAAPEQIAA) is cleaved from the precursor. Cystine bridges form between C66–C94, C68–C83, and C73–C93. The residue at position 78 (R78) is an ADP-ribosylarginine; by ART1. Y85 bears the Phosphotyrosine mark. R88 is modified (ADP-ribosylarginine; by ART1).

The protein belongs to the alpha-defensin family. In terms of assembly, tetramer. Dimer. Interacts with RETN. As to quaternary structure, (Microbial infection) Interacts with HIV-1 surface protein gp120. (Microbial infection) Interacts with herpes virus 1 (HHV1) envelope glycoprotein B; this interaction inhibits viral infection. In terms of processing, ADP-ribosylation drastically reduces cytotoxic and antibacterial activities, and enhances IL8 production. Post-translationally, phosphorylation at Tyr-85 has been found in some cancer cell lines, and interferes with ADP-ribosylation.

It is found in the secreted. Effector molecule of the innate immune system that acts via antibiotic-like properties against a broad array of infectious agents including bacteria, fungi, and viruses or by promoting the activation and maturation of some APCs. Interacts with the essential precursor of cell wall synthesis lipid II to inhibit bacterial cell wall synthesis. Inhibits adenovirus infection via inhibition of viral disassembly at the vertex region, thereby restricting the release of internal capsid protein pVI, which is required for endosomal membrane penetration during cell entry. In addition, interaction with adenovirus capsid leads to the redirection of viral particles to TLR4 thereby promoting a NLRP3-mediated inflammasome response and interleukin 1-beta (IL-1beta) release. Induces the production of proinflammatory cytokines including type I interferon (IFN) in plasmacytoid dendritic cells (pDCs) by triggering the degradation of NFKBIA and nuclear translocation of IRF1, both of which are required for activation of pDCs. The protein is Neutrophil defensin 1 (DEFA1) of Homo sapiens (Human).